Here is a 1239-residue protein sequence, read N- to C-terminus: Anion exchange protein 2 (1239 aa).

Residues 1 to 237 (MSSAPRRPAK…HRSYNLQERR (237 aa)) are disordered. The Cytoplasmic portion of the chain corresponds to 1-706 (MSSAPRRPAK…DFRDALDPQC (706 aa)). 2 stretches are compositionally biased toward basic and acidic residues: residues 37–49 (ELHR…RFEE) and 58–75 (GGEE…EYHR). Basic residues-rich tracts occupy residues 76–85 (QSSHHIHHPL) and 94–110 (RRRK…RRRP). A phosphoserine mark is found at Ser-113, Ser-132, Ser-144, Ser-170, and Ser-172. The span at 120–133 (TIEEGEEDEDEASE) shows a compositional bias: acidic residues. Residues 141 to 155 (TQPSPVSTPSSVQFF) are compositionally biased toward low complexity. Positions 189–207 (GAQAGTQVEEAEAVAVASG) are enriched in low complexity. Over residues 208 to 217 (TAGGDDGGAS) the composition is skewed to gly residues. Ser-241 is subject to Phosphoserine. Thr-255 carries the post-translational modification Phosphothreonine. Lys-272 is modified (N6-methyllysine). Residues 285-318 (HLVRKNAKGSTQSGREGREPGPTPRARPRAPHKP) are disordered. Residue Ser-441 is modified to Phosphoserine. The interval 447 to 468 (SLLGHHHGQGAESDPHVTEPLI) is disordered. Membrane (anion exchange) regions lie at residues 706 to 1239 (CLAA…PMPV) and 708 to 1239 (AAVI…PMPV). The next 4 membrane-spanning stretches (helical) occupy residues 707–727 (LAAV…FGGL), 752–772 (FCLL…LLVF), 794–814 (IGFW…SFLV), and 824–844 (IFAF…LVKI). Residues 845-895 (FQEHPLHGCSASNSSEVDGGENMTWAVARPTLGPGNRSLAGQSGQGKPRGQ) are Extracellular-facing. N-linked (GlcNAc...) asparagine glycans are attached at residues Asn-857, Asn-866, and Asn-880. Residues 896–916 (PNTALLSLVLMAGTFFIAFFL) form a helical membrane-spanning segment. At 917-931 (RKFKNSRFFPGRIRR) the chain is on the cytoplasmic side. A run of 5 helical transmembrane segments spans residues 932–952 (VIGD…DYSI), 987–1007 (FPVW…ILIF), 1034–1054 (LLLI…WLAA), 1088–1108 (RVTG…GDLL), and 1111–1131 (IPLA…LNGI). Cys-1171 is lipidated: S-palmitoyl cysteine. A helical membrane pass occupies residues 1172-1192 (LALLWAVMSTAASLAFPFILI).

This sequence belongs to the anion exchanger (TC 2.A.31) family.

Its subcellular location is the apical cell membrane. The protein localises to the basolateral cell membrane. The enzyme catalyses hydrogencarbonate(in) + chloride(out) = hydrogencarbonate(out) + chloride(in). Functionally, sodium-independent anion exchanger which mediates the electroneutral exchange of chloride for bicarbonate ions across the cell membrane. Plays an important role in osteoclast differentiation and function. Regulates bone resorption and calpain-dependent actin cytoskeleton organization in osteoclasts via anion exchange-dependent control of pH. Essential for intracellular pH regulation in CD8(+) T-cells upon CD3 stimulation, modulating CD8(+) T-cell response. This Pongo abelii (Sumatran orangutan) protein is Anion exchange protein 2 (SLC4A2).